The chain runs to 152 residues: D-erythrulose-4-phosphate isomerase (152 aa).

C67 acts as the Proton acceptor in catalysis.

The protein belongs to the LacAB/RpiB family.

The catalysed reaction is D-erythrulose 4-phosphate = D-erythrose 4-phosphate. Its pathway is carbohydrate metabolism. In terms of biological role, involved in catabolism of D-apiose. Catalyzes the isomerization of D-erythrulose 4-phosphate to D-erythrose 4-phosphate. In Pectobacterium atrosepticum (strain SCRI 1043 / ATCC BAA-672) (Erwinia carotovora subsp. atroseptica), this protein is D-erythrulose-4-phosphate isomerase.